The sequence spans 352 residues: Beta-1,4-xylanase (352 aa).

Positions 1-23 (MINQRFSILVLLLILLTFSLGFL) are cleaved as a signal peptide. The region spanning 29-352 (GMEIPSLKEV…KKAFWEIVKF (324 aa)) is the GH10 domain. Glu-155 acts as the Proton donor in catalysis. The Nucleophile role is filled by Glu-262.

Belongs to the glycosyl hydrolase 10 (cellulase F) family.

It is found in the secreted. It catalyses the reaction Endohydrolysis of (1-&gt;4)-beta-D-xylosidic linkages in xylans.. It participates in glycan degradation; xylan degradation. The polypeptide is Beta-1,4-xylanase (xynA) (Dictyoglomus thermophilum).